The primary structure comprises 380 residues: Protein FAM110B (380 aa).

The segment at 92–272 (ALGSPTLKGF…RPSLQRSKSD (181 aa)) is disordered. Gly residues predominate over residues 100–110 (GFGGGGGGAKS). Residues 127–138 (ILNSSEGSSTGS) are compositionally biased toward polar residues. Positions 153–162 (DAAELHRHSF) are enriched in basic and acidic residues. Residues 239-248 (KVAAPAAVKS) are compositionally biased toward low complexity. Serine 248 and serine 311 each carry phosphoserine. Positions 327-347 (DCEQSQDSNSDLRNDDSANDR) are disordered. Residues 336-345 (SDLRNDDSAN) are compositionally biased toward basic and acidic residues.

This sequence belongs to the FAM110 family.

Its subcellular location is the cytoplasm. The protein resides in the cytoskeleton. It localises to the microtubule organizing center. It is found in the centrosome. The sequence is that of Protein FAM110B (FAM110B) from Bos taurus (Bovine).